The chain runs to 1470 residues: RNA-directed RNA polymerase VP1 (1470 aa).

The disordered stretch occupies residues 28 to 55; sequence AKQDQKENETTSNNKDTSSSVPKPSNFR. Polar residues predominate over residues 37 to 50; the sequence is TTSNNKDTSSSVPK.

The enzyme catalyses RNA(n) + a ribonucleoside 5'-triphosphate = RNA(n+1) + diphosphate. RNA-directed RNA polymerase that is involved in transcription and genome replication. Following infection, it catalyzes the synthesis of fully conservative plus strands. After core assembly, which consists in recruitment of one capped plus-strand for each genomic segments and polymerase complexes, the polymerase switches mode and catalyzes the synthesis of complementary minus-strands. The polypeptide is RNA-directed RNA polymerase VP1 (S1) (Saccharum officinarum (Sugarcane)).